A 108-amino-acid polypeptide reads, in one-letter code: Large ribosomal subunit protein uL24 (108 aa).

This sequence belongs to the universal ribosomal protein uL24 family. In terms of assembly, part of the 50S ribosomal subunit.

Its function is as follows. One of two assembly initiator proteins, it binds directly to the 5'-end of the 23S rRNA, where it nucleates assembly of the 50S subunit. One of the proteins that surrounds the polypeptide exit tunnel on the outside of the subunit. The protein is Large ribosomal subunit protein uL24 of Geobacter metallireducens (strain ATCC 53774 / DSM 7210 / GS-15).